An 88-amino-acid chain; its full sequence is Beta-insect excitatory toxin LqhIT1d (88 aa).

The N-terminal stretch at 1-18 (MKFFLLFLVVLPIMGVLG) is a signal peptide. Positions 20-83 (KNGFAVDSNG…ISDTRKKLCD (64 aa)) constitute an LCN-type CS-alpha/beta domain. Intrachain disulfides connect Cys34-Cys55, Cys40-Cys60, Cys44-Cys62, and Cys56-Cys82.

The protein belongs to the long (4 C-C) scorpion toxin superfamily. Sodium channel inhibitor family. Beta subfamily. In terms of tissue distribution, expressed by the venom gland.

It localises to the secreted. In terms of biological role, excitatory insect toxins induce a spastic paralysis. They bind voltage-independently at site-4 of sodium channels (Nav) and shift the voltage of activation toward more negative potentials thereby affecting sodium channel activation and promoting spontaneous and repetitive firing. This chain is Beta-insect excitatory toxin LqhIT1d, found in Leiurus hebraeus (Hebrew deathstalker scorpion).